Reading from the N-terminus, the 272-residue chain is Putative pyruvate, phosphate dikinase regulatory protein (272 aa).

Gly-153 to Thr-160 is a binding site for ADP.

It belongs to the pyruvate, phosphate/water dikinase regulatory protein family. PDRP subfamily.

The catalysed reaction is N(tele)-phospho-L-histidyl/L-threonyl-[pyruvate, phosphate dikinase] + ADP = N(tele)-phospho-L-histidyl/O-phospho-L-threonyl-[pyruvate, phosphate dikinase] + AMP + H(+). The enzyme catalyses N(tele)-phospho-L-histidyl/O-phospho-L-threonyl-[pyruvate, phosphate dikinase] + phosphate + H(+) = N(tele)-phospho-L-histidyl/L-threonyl-[pyruvate, phosphate dikinase] + diphosphate. In terms of biological role, bifunctional serine/threonine kinase and phosphorylase involved in the regulation of the pyruvate, phosphate dikinase (PPDK) by catalyzing its phosphorylation/dephosphorylation. This is Putative pyruvate, phosphate dikinase regulatory protein from Streptococcus sanguinis (strain SK36).